A 622-amino-acid chain; its full sequence is Chaperone protein HscA homolog (622 aa).

The protein belongs to the heat shock protein 70 family.

Functionally, chaperone involved in the maturation of iron-sulfur cluster-containing proteins. Has a low intrinsic ATPase activity which is markedly stimulated by HscB. In Methylobacillus flagellatus (strain ATCC 51484 / DSM 6875 / VKM B-1610 / KT), this protein is Chaperone protein HscA homolog.